Reading from the N-terminus, the 130-residue chain is Small ribosomal subunit protein uS8y (130 aa).

The protein belongs to the universal ribosomal protein uS8 family.

This chain is Small ribosomal subunit protein uS8y (RPS15AC), found in Arabidopsis thaliana (Mouse-ear cress).